The primary structure comprises 254 residues: Imidazole glycerol phosphate synthase subunit HisF (254 aa).

Residues aspartate 12 and aspartate 131 contribute to the active site.

It belongs to the HisA/HisF family. Heterodimer of HisH and HisF.

It is found in the cytoplasm. The enzyme catalyses 5-[(5-phospho-1-deoxy-D-ribulos-1-ylimino)methylamino]-1-(5-phospho-beta-D-ribosyl)imidazole-4-carboxamide + L-glutamine = D-erythro-1-(imidazol-4-yl)glycerol 3-phosphate + 5-amino-1-(5-phospho-beta-D-ribosyl)imidazole-4-carboxamide + L-glutamate + H(+). It functions in the pathway amino-acid biosynthesis; L-histidine biosynthesis; L-histidine from 5-phospho-alpha-D-ribose 1-diphosphate: step 5/9. IGPS catalyzes the conversion of PRFAR and glutamine to IGP, AICAR and glutamate. The HisF subunit catalyzes the cyclization activity that produces IGP and AICAR from PRFAR using the ammonia provided by the HisH subunit. In Leuconostoc mesenteroides subsp. mesenteroides (strain ATCC 8293 / DSM 20343 / BCRC 11652 / CCM 1803 / JCM 6124 / NCDO 523 / NBRC 100496 / NCIMB 8023 / NCTC 12954 / NRRL B-1118 / 37Y), this protein is Imidazole glycerol phosphate synthase subunit HisF.